Here is a 1111-residue protein sequence, read N- to C-terminus: Serine/threonine-protein kinase Nek10 (1111 aa).

The span at 1-16 shows a compositional bias: basic and acidic residues; the sequence is MPDQDTKAKSTEKTAD. Disordered regions lie at residues 1-24 and 47-72; these read MPDQ…TTTR and AINF…HRAR. Residues 47–63 are compositionally biased toward polar residues; the sequence is AINFDSAQNNMTKSEPT. A coiled-coil region spans residues 481–514; the sequence is YKDLVSQLNLLLEDELKQIAENIESINQKKAPLK. In terms of domain architecture, Protein kinase spans 519–791; that stretch reads YAVLDHLGSG…MISDVMMKYL (273 aa). Residues 525–533 and Lys548 contribute to the ATP site; that span reads LGSGAFGCV. Asp655 functions as the Proton acceptor in the catalytic mechanism.

Belongs to the protein kinase superfamily. NEK Ser/Thr protein kinase family. NIMA subfamily. In terms of assembly, interacts with RAF1 and MAP2K1; the interaction is direct with RAF1 and required for ERK1/2-signaling pathway activation in response to UV irradiation. Requires Mg(2+) as cofactor. In terms of tissue distribution, expressed in the mammary gland, lung, spleen, and kidney.

It catalyses the reaction L-seryl-[protein] + ATP = O-phospho-L-seryl-[protein] + ADP + H(+). The enzyme catalyses L-threonyl-[protein] + ATP = O-phospho-L-threonyl-[protein] + ADP + H(+). Functionally, plays a role in the cellular response to UV irradiation. Mediates G2/M cell cycle arrest, MEK autoactivation and ERK1/2-signaling pathway activation in response to UV irradiation. In ciliated cells, it is involved in the regulation of mucociliary transport. The protein is Serine/threonine-protein kinase Nek10 of Mus musculus (Mouse).